The primary structure comprises 204 residues: Terpene cyclase ausL (204 aa).

5 helical membrane-spanning segments follow: residues 19–39 (LSEM…LAMV), 49–69 (AIAV…AWIY), 75–95 (HWQG…AATL), 114–134 (LVLL…CLAL), and 138–158 (GALG…SAAV).

Belongs to the paxB family.

The protein localises to the membrane. Its pathway is secondary metabolite biosynthesis; terpenoid biosynthesis. Its function is as follows. Terpene cyclase; part of the gene cluster B that mediates the biosynthesis of austinol and dehydroaustinol, two fungal meroterpenoids. The first step of the pathway is the synthesis of 3,5-dimethylorsellinic acid by the polyketide synthase ausA. 3,5-dimethylorsellinic acid is then prenylated by the polyprenyl transferase ausN. Further epoxidation by the FAD-dependent monooxygenase ausM and cyclization by the probable terpene cyclase ausL lead to the formation of protoaustinoid A. Protoaustinoid A is then oxidized to spiro-lactone preaustinoid A3 by the combined action of the FAD-binding monooxygenases ausB and ausC, and the dioxygenase ausE. Acid-catalyzed keto-rearrangement and ring contraction of the tetraketide portion of preaustinoid A3 by ausJ lead to the formation of preaustinoid A4. The aldo-keto reductase ausK, with the help of ausH, is involved in the next step by transforming preaustinoid A4 into isoaustinone which is in turn hydroxylated by the P450 monooxygenase ausI to form austinolide. Finally, the cytochrome P450 monooxygenase ausG modifies austinolide to austinol. Austinol can be further modified to dehydroaustinol which forms a diffusible complex with diorcinol that initiates conidiation. Due to genetic rearrangements of the clusters and the subsequent loss of some enzymes, the end products of the Emericella nidulans austinoid biosynthesis clusters are austinol and dehydroaustinol, even if additional enzymes, such as the O-acetyltransferase ausQ and the cytochrome P450 monooxygenase ausR are still functional. The sequence is that of Terpene cyclase ausL from Emericella nidulans (strain FGSC A4 / ATCC 38163 / CBS 112.46 / NRRL 194 / M139) (Aspergillus nidulans).